A 489-amino-acid polypeptide reads, in one-letter code: N-succinylglutamate 5-semialdehyde dehydrogenase (489 aa).

216-221 (GSAATG) is an NAD(+) binding site. Catalysis depends on residues E239 and C273.

Belongs to the aldehyde dehydrogenase family. AstD subfamily.

The enzyme catalyses N-succinyl-L-glutamate 5-semialdehyde + NAD(+) + H2O = N-succinyl-L-glutamate + NADH + 2 H(+). It participates in amino-acid degradation; L-arginine degradation via AST pathway; L-glutamate and succinate from L-arginine: step 4/5. Its function is as follows. Catalyzes the NAD-dependent reduction of succinylglutamate semialdehyde into succinylglutamate. The polypeptide is N-succinylglutamate 5-semialdehyde dehydrogenase (Erwinia tasmaniensis (strain DSM 17950 / CFBP 7177 / CIP 109463 / NCPPB 4357 / Et1/99)).